A 132-amino-acid polypeptide reads, in one-letter code: T-cell receptor alpha chain V region 2B4 (132 aa).

Positions 1-20 (MKSLSVSLVVLWLLLNWVNS) are cleaved as a signal peptide. A v segment region spans residues 21–113 (QQNVQQSPES…SALYLCAVTL (93 aa)). N-linked (GlcNAc...) asparagine glycosylation occurs at asparagine 42. The interval 114–117 (YGGS) is d segment. The interval 118-132 (GNKLIFGTGTLLSVK) is j segment.

This Mus musculus (Mouse) protein is T-cell receptor alpha chain V region 2B4.